Consider the following 92-residue polypeptide: Protein RnfH (92 aa).

This sequence belongs to the UPF0125 (RnfH) family.

The chain is Protein RnfH from Neisseria gonorrhoeae (strain NCCP11945).